We begin with the raw amino-acid sequence, 754 residues long: Glutathione biosynthesis bifunctional protein GshAB (754 aa).

The tract at residues 1–332 is glutamate--cysteine ligase; sequence MTLNQLLQKL…QGHALNEKIA (332 aa). The ATP-grasp domain occupies 488–746; that stretch reads KKILADASFP…ITTKILDKLF (259 aa). 515 to 573 is a binding site for ATP; it reads PLIKDKQIVVKPKSTNFGLGISIFQEPASLDNYQKALEIAFAEDTSVLVEEFIPGTEYR. The Mg(2+) site is built by aspartate 695, glutamate 716, and asparagine 718. Mn(2+) is bound by residues aspartate 695, glutamate 716, and asparagine 718.

This sequence in the N-terminal section; belongs to the glutamate--cysteine ligase type 1 family. Type 2 subfamily. As to quaternary structure, monomer. The cofactor is Mg(2+). Mn(2+) serves as cofactor.

The enzyme catalyses L-cysteine + L-glutamate + ATP = gamma-L-glutamyl-L-cysteine + ADP + phosphate + H(+). The catalysed reaction is gamma-L-glutamyl-L-cysteine + glycine + ATP = glutathione + ADP + phosphate + H(+). It functions in the pathway sulfur metabolism; glutathione biosynthesis; glutathione from L-cysteine and L-glutamate: step 1/2. The protein operates within sulfur metabolism; glutathione biosynthesis; glutathione from L-cysteine and L-glutamate: step 2/2. Its function is as follows. Synthesizes glutathione from L-glutamate and L-cysteine via gamma-L-glutamyl-L-cysteine. The polypeptide is Glutathione biosynthesis bifunctional protein GshAB (Streptococcus thermophilus (strain ATCC BAA-250 / LMG 18311)).